Consider the following 63-residue polypeptide: Cecropin-A1 (63 aa).

Residues 1 to 23 (MKFYNIFVFVALILAITIGQSEA) form the signal peptide. At Arg62 the chain carries Arginine amide.

It belongs to the cecropin family.

The protein resides in the secreted. Cecropins have lytic and antibacterial activity against several Gram-positive and Gram-negative bacteria. The protein is Cecropin-A1 (CecA1) of Drosophila mauritiana (Fruit fly).